Here is a 336-residue protein sequence, read N- to C-terminus: MAMPTLDPNAPDFTRRYPNLADPRLGAVATFATDEFFAPKDRMLNPEPAVFIPGKYDDHGKWMDGWETRRRRNGGYDHCIVKLARPGVVKGVDIDTSHFTGNFPPAASIDAAYLPHGEPTDATQWTEIVPSTTLQGNSHHYLDVFGTHAYTHLRVNIYPDGGIARLRVYGQPQVDWKGADRATLFDLAAMENGAYVVEVNNQHFGLASSLLMPGRGINMGDGWETRRRREPGNDWCIIALAHPGRIRKIEVDTAHFKGNFADRVSLQAARVTGGTDATLKTQAMFWQTLLPEQKLQMDHQHYYEAELADLGPVTHVRFNMFPDGGVSRLRLWGALE.

Belongs to the allantoicase family.

The catalysed reaction is allantoate + H2O = (S)-ureidoglycolate + urea. It participates in nitrogen metabolism; (S)-allantoin degradation; (S)-ureidoglycolate from allantoate (aminidohydrolase route): step 1/1. This Ralstonia nicotianae (strain ATCC BAA-1114 / GMI1000) (Ralstonia solanacearum) protein is Probable allantoicase.